A 793-amino-acid polypeptide reads, in one-letter code: Copalyl diphosphate synthase CPS1, chloroplastic (793 aa).

A chloroplast-targeting transit peptide spans 1–59 (MASLSSTILSRSPAARRRITPASAKLHRPECFATSAWMGSSSKNLSLSYQLNHKKISVA). Residue Lys-238 participates in substrate binding. Mg(2+) contacts are provided by Asp-370 and Asp-372. A DXDD motif motif is present at residues 370–373 (DIDD). Lys-457 is a binding site for substrate.

This sequence belongs to the terpene synthase family. Requires Mg(2+) as cofactor.

Its subcellular location is the plastid. The protein resides in the chloroplast. It catalyses the reaction (2E,6E,10E)-geranylgeranyl diphosphate = (+)-copalyl diphosphate. It functions in the pathway secondary metabolite biosynthesis; terpenoid biosynthesis. Functionally, involved in tanshinone biosynthesis in hairy roots. Catalyzes the conversion of geranylgeranyl diphosphate (GGPP) to copalyl diphosphate (CPP). This Salvia miltiorrhiza (Chinese sage) protein is Copalyl diphosphate synthase CPS1, chloroplastic.